Here is a 354-residue protein sequence, read N- to C-terminus: Homer protein homolog 1 (354 aa).

A WH1 domain is found at M1 to A110. G2 carries the post-translational modification N-acetylglycine. A disordered region spans residues K114–P172. Composition is skewed to polar residues over residues S138–G147 and D155–P172. Residues K181 to E352 adopt a coiled-coil conformation. The segment at K290–S354 is required for tetramerization. S306 carries the post-translational modification Phosphoserine.

The protein belongs to the Homer family. As to quaternary structure, tetramer; this tetrameric structure is critical for forming the high-order complex with SHANK1, which in turn is necessary for the structural and functional integrity of dendritic spines. Interacts with GRM1, GRM5, ITPR1, DNM3, RYR1, RYR2 and SHANK3. Interacts with IFT57 and OPHN1. Encodes a coiled-coil structure that mediates homo- and heteromultimerization. Interacts with SHANK1; forms high-order polymerized complex with a mesh-like network structure, at least composed of SHANK1, HOMER1 and DLGAP1; the complex formation is SHANK1 multimerization dependent. Interacts with NFATC4. Interacts with DAGLA (via PPXXF motif); this interaction is required for the cell membrane localization of DAGLA. Interacts with SRGAP2.

The protein localises to the cytoplasm. It is found in the postsynaptic density. Its subcellular location is the synapse. The protein resides in the cell projection. It localises to the dendritic spine. Postsynaptic density scaffolding protein. Binds and cross-links cytoplasmic regions of GRM1, GRM5, ITPR1, DNM3, RYR1, RYR2, SHANK1 and SHANK3. By physically linking GRM1 and GRM5 with ER-associated ITPR1 receptors, it aids the coupling of surface receptors to intracellular calcium release. May also couple GRM1 to PI3 kinase through its interaction with AGAP2. Forms a high-order complex with SHANK1, which in turn is necessary for the structural and functional integrity of dendritic spines. Negatively regulates T cell activation by inhibiting the calcineurin-NFAT pathway. Acts by competing with calcineurin/PPP3CA for NFAT protein binding, hence preventing NFAT activation by PPP3CA. The chain is Homer protein homolog 1 from Bos taurus (Bovine).